Consider the following 146-residue polypeptide: Basic phospholipase A2 beta-bungarotoxin A2 chain (146 aa).

The N-terminal stretch at 1–19 (MNPAHLLVLSAVCVSLLGA) is a signal peptide. A propeptide spanning residues 20 to 27 (SNIPPQSL) is cleaved from the precursor. 6 disulfide bridges follow: C54/C145, C56/C72, C71/C126, C78/C119, C87/C112, and C105/C117. Residues Y55, G57, and G59 each coordinate Ca(2+). The active site involves H75. D76 is a binding site for Ca(2+). D120 is a catalytic residue.

This sequence belongs to the phospholipase A2 family. Group I subfamily. D49 sub-subfamily. Heterodimer; disulfide-linked. The A chain has phospholipase A2 activity and the B chain shows homology with the basic protease inhibitors. It depends on Ca(2+) as a cofactor. As to expression, expressed by the venom gland.

The protein localises to the secreted. The enzyme catalyses a 1,2-diacyl-sn-glycero-3-phosphocholine + H2O = a 1-acyl-sn-glycero-3-phosphocholine + a fatty acid + H(+). Its function is as follows. Snake venom phospholipase A2 (PLA2) that inhibits neuromuscular transmission by blocking acetylcholine release from the nerve termini. PLA2 catalyzes the calcium-dependent hydrolysis of the 2-acyl groups in 3-sn-phosphoglycerides. The sequence is that of Basic phospholipase A2 beta-bungarotoxin A2 chain from Bungarus flaviceps flaviceps (Red-headed krait).